The following is a 154-amino-acid chain: Prefoldin subunit 2 (154 aa).

Disordered regions lie at residues 1-20 (MADSSGRVGKSGGSGTGKGA) and 126-154 (LMGEDEKPAAKENSEGAGAKSSSAGVLVS). A compositionally biased stretch (gly residues) spans 9–18 (GKSGGSGTGK). A compositionally biased stretch (basic and acidic residues) spans 126–139 (LMGEDEKPAAKENS). Residues 141 to 154 (GAGAKSSSAGVLVS) are compositionally biased toward low complexity.

The protein belongs to the prefoldin subunit beta family. As to quaternary structure, heterohexamer of two PFD-alpha type and four PFD-beta type subunits. Component of the PAQosome complex which is responsible for the biogenesis of several protein complexes and which consists of R2TP complex members RUVBL1, RUVBL2, RPAP3 and PIH1D1, URI complex members PFDN2, PFDN6, PDRG1, UXT and URI1 as well as ASDURF, POLR2E and DNAAF10/WDR92. Interacts with URI1; the interaction is phosphorylation-dependent and occurs in a growth-dependent manner.

The protein resides in the nucleus. It is found in the cytoplasm. Its subcellular location is the mitochondrion. In terms of biological role, binds specifically to cytosolic chaperonin (c-CPN) and transfers target proteins to it. Binds to nascent polypeptide chain and promotes folding in an environment in which there are many competing pathways for nonnative proteins. This Rattus norvegicus (Rat) protein is Prefoldin subunit 2 (Pfdn2).